We begin with the raw amino-acid sequence, 514 residues long: Cytochrome bd-II ubiquinol oxidase subunit 1 (514 aa).

At 1–22 (MWDVIDLSRWQFALTALYHFLF) the chain is on the cytoplasmic side. His-19 is a binding site for heme. The chain crosses the membrane as a helical span at residues 23–42 (VPLTLGLIFLLAIMETIYVV). Residues 43–94 (TGKTIYRDMTRFWGKLFGINFALGVATGLTMEFQFGTNWSFYSNYVGDIFGA) lie on the Periplasmic side of the membrane. A helical membrane pass occupies residues 95-114 (PLAMEALMAFFLESTFVGLF). The Cytoplasmic segment spans residues 115–129 (FFGWQRLNKYQHLLV). Residues 130-149 (TWLVAFGSNLSALWILNANG) traverse the membrane as a helical segment. At 150 to 187 (WMQYPTGAHFDIDTLRMEMTSFSELVFNPVSQVKFVHT) the chain is on the periplasmic side. His-186 serves as a coordination point for heme. The chain crosses the membrane as a helical span at residues 188–207 (VMAGYVTGAMFIMAISAWYL). Residues 208 to 219 (LRGRERNVALRS) are Cytoplasmic-facing. Residues 220–239 (FAIGSVFGTLAIIGTLQLGD) traverse the membrane as a helical segment. Over 240-392 (SSAYEVAQVQ…VAPVFWSFRI (153 aa)) the chain is Periplasmic. Residue Met-393 coordinates heme. The chain crosses the membrane as a helical span at residues 393-412 (MVGCGSLLLLVMLIALVQTL). At 413-470 (RGKIDQHRWVLKMALWSLPLPWIAIEAGWFMTEFGRQPWAIQDILPTYSAHSALTTGQ) the chain is on the cytoplasmic side. Residues 471–490 (LAFSLIMIVGLYTLFLIAEV) traverse the membrane as a helical segment. Residues 491–514 (YLMQKYARLGPSAMQSEQPTQQQG) lie on the Periplasmic side of the membrane.

Belongs to the cytochrome ubiquinol oxidase subunit 1 family. Heterodimer of subunits I and II. The cofactor is heme. In terms of processing, the N-terminus is blocked.

It is found in the cell inner membrane. The enzyme catalyses 2 a ubiquinol + O2 + n H(+)(in) = 2 a ubiquinone + 2 H2O + n H(+)(out). It functions in the pathway energy metabolism; oxidative phosphorylation. With respect to regulation, inhibited by cyanide; is more sensitive to cyanide than cytochrome bd-I oxidase. A terminal oxidase that catalyzes quinol-dependent, Na(+)-independent oxygen uptake. Prefers menadiol over other quinols although ubiquinol was not tested. Generates a proton motive force using protons and electrons from opposite sides of the membrane to generate H(2)O, transferring 1 proton/electron. This chain is Cytochrome bd-II ubiquinol oxidase subunit 1 (appC), found in Escherichia coli (strain K12).